The chain runs to 612 residues: Zinc metalloproteinase nas-36 (612 aa).

Positions 1-16 (MLLLVLLFVFISATNA) are cleaved as a signal peptide. N15 carries N-linked (GlcNAc...) asparagine glycosylation. Residues 17–122 (SDVGRRELEK…KSKPNVRGRR (106 aa)) constitute a propeptide that is removed on maturation. Residues 123 to 320 (SFDASPESKW…IETINKAYCS (198 aa)) form the Peptidase M12A domain. N163 carries N-linked (GlcNAc...) asparagine glycosylation. Disulfide bonds link C166/C319, C190/C209, C329/C343, C345/C354, C365/C394, C515/C546, C519/C551, and C531/C536. Position 217 (H217) interacts with Zn(2+). E218 is an active-site residue. Residues H221 and H227 each contribute to the Zn(2+) site. Positions 320-355 (SDRCSGSNDCKNGGYPHPKQCDTCLCPNGLSGPKCE) constitute an EGF-like domain. The CUB domain maps to 365–478 (CGGKIVVKEE…VGFKLQARAT (114 aa)). Residues 503–552 (TDQWAEWGSWSQCSRSCGGCGIMSRVRVCRTKQCKGRRQEFSTCNLKACP) form the TSP type-1 domain.

Zn(2+) serves as cofactor.

Its subcellular location is the secreted. With respect to regulation, inhibited by 1,10-phenanthroline. Metalloprotease. Involved in molting, a process during larval stages in which a new cuticle is formed and the old cuticle is shed. The polypeptide is Zinc metalloproteinase nas-36 (Haemonchus contortus (Barber pole worm)).